Consider the following 212-residue polypeptide: MPVHEIRHPLIRHKLGLMRRADISTKNFRELAQEVGALLTYEATKDLPLEQYEIPGWAGPVTVEKISGKKITVVPILRAGIGMLDGVLSLVPGAKVSAVGVARNEETLEARTYLEKLAPDIAERRSLIIDPMLATGGSMVATIDLLKKAGSKEIRAMVLVAAPEGIEAVRQAHPDVIIYTASIDEKLDENGYIIPGLGDAGDKIFGTKQKEA.

Residues Arg-78, Arg-103, and 130–138 (DPMLATGGS) each bind 5-phospho-alpha-D-ribose 1-diphosphate. Uracil is bound by residues Ile-193 and 198–200 (GDA). Asp-199 lines the 5-phospho-alpha-D-ribose 1-diphosphate pocket.

This sequence belongs to the UPRTase family. Requires Mg(2+) as cofactor.

The enzyme catalyses UMP + diphosphate = 5-phospho-alpha-D-ribose 1-diphosphate + uracil. The protein operates within pyrimidine metabolism; UMP biosynthesis via salvage pathway; UMP from uracil: step 1/1. Its activity is regulated as follows. Allosterically activated by GTP. Catalyzes the conversion of uracil and 5-phospho-alpha-D-ribose 1-diphosphate (PRPP) to UMP and diphosphate. This Pseudomonas paraeruginosa (strain DSM 24068 / PA7) (Pseudomonas aeruginosa (strain PA7)) protein is Uracil phosphoribosyltransferase.